Consider the following 302-residue polypeptide: Tritrans,polycis-undecaprenyl-diphosphate synthase (geranylgeranyl-diphosphate specific) (302 aa).

Aspartate 33 is a catalytic residue. Aspartate 33 provides a ligand contact to Mg(2+). Residues 34 to 37 (GNRR) and 78 to 80 (STE) each bind substrate. Asparagine 81 (proton acceptor) is an active-site residue. Residues phenylalanine 82, arginine 84, arginine 203, and 209-211 (RTS) each bind substrate.

This sequence belongs to the UPP synthase family. As to quaternary structure, homodimer. Mg(2+) is required as a cofactor.

It carries out the reaction geranylgeranyl diphosphate + 7 isopentenyl diphosphate = tri-trans,hepta-cis-undecaprenyl diphosphate + 7 diphosphate. In terms of biological role, catalyzes the sequential condensation of isopentenyl diphosphate (IPP) with geranylgeranyl diphosphate (GGPP) to yield (2Z,6Z,10Z,14Z,18Z,22Z,26Z,30E,34E,38E)-undecaprenyl diphosphate (tritrans,heptacis-UPP). It is probably the precursor of glycosyl carrier lipids. The sequence is that of Tritrans,polycis-undecaprenyl-diphosphate synthase (geranylgeranyl-diphosphate specific) from Halobacterium salinarum (strain ATCC 700922 / JCM 11081 / NRC-1) (Halobacterium halobium).